Reading from the N-terminus, the 446-residue chain is Forkhead box protein F2 (446 aa).

Pro residues predominate over residues 1–18 (MSTEGGPPPPPPRPPPAP). Residues 1 to 97 (MSTEGGPPPP…TKKATSGLRR (97 aa)) are disordered. The segment covering 45–78 (STSSSSSSSSASCASSSSNSVSASAGACKSAASS) has biased composition (low complexity). Positions 100–194 (KPPYSYIALI…EEGSFRRRPR (95 aa)) form a DNA-binding region, fork-head. 3 disordered regions span residues 257 to 278 (AGAP…HMSP), 304 to 325 (GGGG…SPAM), and 340 to 371 (AHWS…GLHP). Over residues 263-274 (AHPHHLHHHHVP) the composition is skewed to basic residues. Positions 311-325 (GPDSSSSPVPSSPAM) are enriched in low complexity.

In terms of assembly, interacts with the transcription factors TBP and TFIIB. In terms of tissue distribution, uniquely expressed in the bronchiolar epithelium and in type II pneumocytes.

The protein localises to the nucleus. In terms of biological role, probable transcription activator for a number of lung-specific genes. Mediates up-regulation of the E3 ligase IRF2BPL and drives ubiquitination and degradation of CTNNB1. This is Forkhead box protein F2 (Foxf2) from Mus musculus (Mouse).